A 201-amino-acid chain; its full sequence is Sterile alpha motif domain-containing protein 12 (201 aa).

The region spanning 77–143 is the SAM domain; sequence WTQQDVCKWL…LQQVLQLKVR (67 aa).

The protein is Sterile alpha motif domain-containing protein 12 (SAMD12) of Pongo abelii (Sumatran orangutan).